The following is a 489-amino-acid chain: Ataxin-10 homolog (489 aa).

It belongs to the ataxin-10 family.

The protein resides in the cytoplasm. May play a role in the regulation of cytokinesis. This is Ataxin-10 homolog (CTR86) from Debaryomyces hansenii (strain ATCC 36239 / CBS 767 / BCRC 21394 / JCM 1990 / NBRC 0083 / IGC 2968) (Yeast).